The sequence spans 250 residues: Hydroxyethylthiazole kinase (250 aa).

Met39 serves as a coordination point for substrate. Arg114 and Thr159 together coordinate ATP. Gly186 provides a ligand contact to substrate.

Belongs to the Thz kinase family. It depends on Mg(2+) as a cofactor.

The enzyme catalyses 5-(2-hydroxyethyl)-4-methylthiazole + ATP = 4-methyl-5-(2-phosphooxyethyl)-thiazole + ADP + H(+). It functions in the pathway cofactor biosynthesis; thiamine diphosphate biosynthesis; 4-methyl-5-(2-phosphoethyl)-thiazole from 5-(2-hydroxyethyl)-4-methylthiazole: step 1/1. Its function is as follows. Catalyzes the phosphorylation of the hydroxyl group of 4-methyl-5-beta-hydroxyethylthiazole (THZ). This chain is Hydroxyethylthiazole kinase, found in Lactococcus lactis subsp. cremoris (strain SK11).